Consider the following 226-residue polypeptide: Ribosomal RNA small subunit methyltransferase G (226 aa).

Residues G95, L100, 146–147, and R159 each bind S-adenosyl-L-methionine; that span reads VE.

It belongs to the methyltransferase superfamily. RNA methyltransferase RsmG family.

It is found in the cytoplasm. The catalysed reaction is guanosine(527) in 16S rRNA + S-adenosyl-L-methionine = N(7)-methylguanosine(527) in 16S rRNA + S-adenosyl-L-homocysteine. Functionally, specifically methylates the N7 position of guanine in position 527 of 16S rRNA. This Acidovorax ebreus (strain TPSY) (Diaphorobacter sp. (strain TPSY)) protein is Ribosomal RNA small subunit methyltransferase G.